The primary structure comprises 412 residues: Dihydrolipoyllysine-residue acetyltransferase component of pyruvate dehydrogenase complex (412 aa).

Residues 2-78 (PIKILMPALS…PVNSLIAVLS (77 aa)) form the Lipoyl-binding domain. Lys43 carries the N6-lipoyllysine modification. The 38-residue stretch at 132–169 (FASPLAKRLAKMRNIRFESVKGSGPHGRIVKQDILSYT) folds into the Peripheral subunit-binding (PSBD) domain. Residue His385 is part of the active site.

It belongs to the 2-oxoacid dehydrogenase family. Forms a 24-polypeptide structural core with octahedral symmetry. (R)-lipoate is required as a cofactor.

The catalysed reaction is N(6)-[(R)-dihydrolipoyl]-L-lysyl-[protein] + acetyl-CoA = N(6)-[(R)-S(8)-acetyldihydrolipoyl]-L-lysyl-[protein] + CoA. The pyruvate dehydrogenase complex catalyzes the overall conversion of pyruvate to acetyl-CoA and CO(2). It contains multiple copies of three enzymatic components: pyruvate dehydrogenase (E1), dihydrolipoamide acetyltransferase (E2) and lipoamide dehydrogenase (E3). The polypeptide is Dihydrolipoyllysine-residue acetyltransferase component of pyruvate dehydrogenase complex (pdhC) (Rickettsia conorii (strain ATCC VR-613 / Malish 7)).